A 209-amino-acid chain; its full sequence is Large ribosomal subunit protein uL3 (209 aa).

The interval 118–152 (GFQGAIKRHGQSRGPMSHGSRYHRRPGSMGPVDPN) is disordered.

The protein belongs to the universal ribosomal protein uL3 family. As to quaternary structure, part of the 50S ribosomal subunit. Forms a cluster with proteins L14 and L19.

Functionally, one of the primary rRNA binding proteins, it binds directly near the 3'-end of the 23S rRNA, where it nucleates assembly of the 50S subunit. This chain is Large ribosomal subunit protein uL3, found in Bacillus licheniformis (strain ATCC 14580 / DSM 13 / JCM 2505 / CCUG 7422 / NBRC 12200 / NCIMB 9375 / NCTC 10341 / NRRL NRS-1264 / Gibson 46).